The chain runs to 922 residues: Isoleucine--tRNA ligase (922 aa).

The short motif at 57-67 is the 'HIGH' region element; it reads PYANGDIHLGH. An L-isoleucyl-5'-AMP-binding site is contributed by Glu553. The 'KMSKS' region motif lies at 594-598; sequence KMSKS. Position 597 (Lys597) interacts with ATP. 4 residues coordinate Zn(2+): Cys892, Cys895, Cys912, and Cys915.

The protein belongs to the class-I aminoacyl-tRNA synthetase family. IleS type 1 subfamily. In terms of assembly, monomer. The cofactor is Zn(2+).

It localises to the cytoplasm. The catalysed reaction is tRNA(Ile) + L-isoleucine + ATP = L-isoleucyl-tRNA(Ile) + AMP + diphosphate. Catalyzes the attachment of isoleucine to tRNA(Ile). As IleRS can inadvertently accommodate and process structurally similar amino acids such as valine, to avoid such errors it has two additional distinct tRNA(Ile)-dependent editing activities. One activity is designated as 'pretransfer' editing and involves the hydrolysis of activated Val-AMP. The other activity is designated 'posttransfer' editing and involves deacylation of mischarged Val-tRNA(Ile). The polypeptide is Isoleucine--tRNA ligase (Desulfitobacterium hafniense (strain Y51)).